The chain runs to 2020 residues: Metacaspase-2 (2020 aa).

2 stretches are compositionally biased toward basic and acidic residues: residues 51–60 and 69–78; these read SENDRNESIQ and DNRKTNKSEK. Disordered stretches follow at residues 51–78 and 573–614; these read SEND…KSEK and RNGN…NINN. A compositionally biased stretch (low complexity) spans 576 to 614; it reads NINNNKNNNINNNNNNINNNNNNINNNNNNINNNNNINN.

It belongs to the peptidase C14B family.

Its subcellular location is the cytoplasm. Ca(2+) does not appear to affect catalytic activity. Its function is as follows. Protease that cleaves specifically after arginine or lysine residues. May play a role in parasite growth and/or development. This chain is Metacaspase-2, found in Plasmodium falciparum (isolate 3D7).